Consider the following 510-residue polypeptide: MKIEKSQRNLEIDRSRKNDFLYPLIFREYIYTFAHDRDLNRSILLENVSYDNKYSLLIVKRLITRMYQQNHLIISANDSNQNTFFRYNKNLYFQMISEGFAVIVEIPFSLRLVSSLERSEIVKSHNLRSIHSIFPFLEGKFPHLNYLSEGLIPYPIHLEKLVQILRYWVKDPSSLHLLRLFLHEYWNLNSLIIPKKSISFFVKKNQRFFLFLYNSHVYEYESVFFFLCKQSFHFRLTFYQVFLERIYFYGKIEHFVEVFTKDWGDSLCLLKDPFIHYIRYQGKSIFVSKDTPLLMKKWKYYLVNLCQCHFDVCFQPQKIHINPFSLYKHSFALLGYLSSSSVRLNLSVVRSQMLENAFLMDNIMNKLDTTVSIIPLIGSLAKMKFCNAVGHPISKPTWADFSDSDIIDRFVRICRNLSHYYSGSSRKKSLYRIKYILRLSCVKTLARKHKSTVRIFLKRLGSELLEEFFTEEEQIIFLIFPRASSISQKLYRGRVWYLDIICINELSNHE.

Belongs to the intron maturase 2 family. MatK subfamily.

It localises to the plastid. The protein resides in the chloroplast. In terms of biological role, usually encoded in the trnK tRNA gene intron. Probably assists in splicing its own and other chloroplast group II introns. This is Maturase K from Populus alba (White poplar).